We begin with the raw amino-acid sequence, 919 residues long: Chaperone protein ClpC2, chloroplastic (919 aa).

Residues 1 to 54 constitute a chloroplast transit peptide; that stretch reads MAGTLLQPVALGTTFAGRVSGQRWKSHGTRRPPSMLAMSLSRPVKMAAFVGLRS. Positions 89–231 constitute a Clp R domain; that stretch reads FERFTEKAIK…RTQVIRMIGE (143 aa). Repeat stretches follow at residues 92–157 and 167–231; these read FTEK…IGRG and FTPR…MIGE. Positions 252–499 are i; sequence LEEYGTNLTK…RVRLRHAQVP (248 aa). 297 to 304 serves as a coordination point for ATP; sequence GEPGVGKT. The UVR domain maps to 506–541; sequence DKELKQITKDKNEAVRSQDFEKAGELRDREMELKAQ. The segment at 566–757 is II; sequence VNEADIQHIV…LLIMTSNVGS (192 aa). Residue 640 to 647 participates in ATP binding; it reads GPTGVGKS.

It belongs to the ClpA/ClpB family. ClpC subfamily.

The protein resides in the plastid. It localises to the chloroplast. Functionally, molecular chaperone that may interact with a ClpP-like protease involved in degradation of denatured proteins in the chloroplast. This is Chaperone protein ClpC2, chloroplastic (CLPC2) from Oryza sativa subsp. japonica (Rice).